A 200-amino-acid polypeptide reads, in one-letter code: Regulator of G-protein signaling 16 (200 aa).

2 S-palmitoyl cysteine lipidation sites follow: Cys-2 and Cys-12. The region spanning 65–181 is the RGS domain; that stretch reads SFDLLLSSKN…LKSPAYRDLA (117 aa). Residues Tyr-168 and Tyr-177 each carry the phosphotyrosine modification.

As to quaternary structure, interacts with GNAI1 and GNAQ. Interacts with GNAI3, GNAI3 and GNAO1. In terms of assembly, (Microbial infection) Interacts with porcine circovirus 2 ORF3 protein. Palmitoylated on Cys-2 and/or Cys-12. In terms of processing, phosphorylated. Phosphorylation at Tyr-168 by EGFR enhances GTPase accelerating (GAP) activity toward GNAI1.

It localises to the membrane. In terms of biological role, regulates G protein-coupled receptor signaling cascades. Inhibits signal transduction by increasing the GTPase activity of G protein alpha subunits, thereby driving them into their inactive GDP-bound form. Plays an important role in the phototransduction cascade by regulating the lifetime and effective concentration of activated transducin alpha. May regulate extra and intracellular mitogenic signals. Functionally, (Microbial infection) Gets inactivated and/or degraded by porcine circovirus 2 ORF3 protein, leading to enhanced expression of IL-6 and IL-8 in infected lymphocytes. This would explain chronic inflammatory response of PCV2 infected pigs. This Sus scrofa (Pig) protein is Regulator of G-protein signaling 16 (RGS16).